Here is a 224-residue protein sequence, read N- to C-terminus: V-type ATP synthase subunit D (224 aa).

Residues 190–224 (REAGYTQKKIKAKIEGKNKEAREAAAATSHGSAAD) form a disordered region. Residues 201 to 212 (AKIEGKNKEARE) are compositionally biased toward basic and acidic residues. The segment covering 213 to 224 (AAAATSHGSAAD) has biased composition (low complexity).

It belongs to the V-ATPase D subunit family.

Its function is as follows. Produces ATP from ADP in the presence of a proton gradient across the membrane. The sequence is that of V-type ATP synthase subunit D (atpD) from Deinococcus radiodurans (strain ATCC 13939 / DSM 20539 / JCM 16871 / CCUG 27074 / LMG 4051 / NBRC 15346 / NCIMB 9279 / VKM B-1422 / R1).